Here is a 191-residue protein sequence, read N- to C-terminus: Potassium-transporting ATPase KdpC subunit (191 aa).

The chain crosses the membrane as a helical span at residues 6-26; the sequence is PALVLFILLTLLTGGVYPLLT.

The protein belongs to the KdpC family. As to quaternary structure, the system is composed of three essential subunits: KdpA, KdpB and KdpC.

It is found in the cell inner membrane. Its function is as follows. Part of the high-affinity ATP-driven potassium transport (or Kdp) system, which catalyzes the hydrolysis of ATP coupled with the electrogenic transport of potassium into the cytoplasm. This subunit acts as a catalytic chaperone that increases the ATP-binding affinity of the ATP-hydrolyzing subunit KdpB by the formation of a transient KdpB/KdpC/ATP ternary complex. The polypeptide is Potassium-transporting ATPase KdpC subunit (Klebsiella pneumoniae (strain 342)).